The primary structure comprises 151 residues: Spore coat polysaccharide biosynthesis protein SpsL (151 aa).

It to dTDP-4-dehydrorhamnose reductase.

It participates in spore coat biogenesis; spore coat polysaccharide biosynthesis. The chain is Spore coat polysaccharide biosynthesis protein SpsL (spsL) from Bacillus subtilis (strain 168).